Here is a 50-residue protein sequence, read N- to C-terminus: Metallothionein zym1 (50 aa).

The Zn(2+) site is built by Cys7, Cys15, Cys17, Cys21, Cys23, Cys26, Cys30, Cys32, Cys40, Cys42, Cys45, and Cys47.

Belongs to the metallothionein superfamily.

Its subcellular location is the cytoplasm. The protein resides in the nucleus. Metallothionein involved in tolerance to zinc and cadmium. Binds four zinc ions. The sequence is that of Metallothionein zym1 (zym1) from Schizosaccharomyces pombe (strain 972 / ATCC 24843) (Fission yeast).